A 92-amino-acid chain; its full sequence is MQFHLLVMTTIAASFAATGSALPHTNVLPKIGTLRGAINNDAATFNGRALRNTENRGLIGDDSDSSISDSDSEAKEYRAYKSHKEHFGYQMP.

The N-terminal stretch at 1–21 is a signal peptide; the sequence is MQFHLLVMTTIAASFAATGSA. The RxLR motif lies at 48 to 51; sequence RALR. The disordered stretch occupies residues 54–75; it reads ENRGLIGDDSDSSISDSDSEAK.

It belongs to the RxLR effector family.

It localises to the secreted. Its subcellular location is the host cytoplasm. It is found in the host nucleus. Its function is as follows. Secreted effector that suppresses pattern-triggered immunity (PTI) in plant host. The polypeptide is Secreted RxLR effector protein RXLR-C02 (Plasmopara halstedii (Downy mildew of sunflower)).